A 1105-amino-acid chain; its full sequence is AP-3 complex subunit beta-1 (1105 aa).

Disordered regions lie at residues 1–26 (MSSN…EATS) and 271–292 (KNFY…KKSY). Serine 276 and serine 610 each carry phosphoserine. A disordered region spans residues 668 to 824 (KKEKPMKKFY…KPQQERHPPS (157 aa)). The segment covering 679-704 (ESEEEEDEDEDEDEEEEEKEDEDENP) has biased composition (acidic residues). 2 stretches are compositionally biased toward low complexity: residues 705–722 (SDSS…SGDT) and 730–741 (DSSSGQDSETGS). Residues 750-759 (VAKRNSKTKR) are compositionally biased toward basic residues. Over residues 760 to 774 (KSDSENREKKNENSK) the composition is skewed to basic and acidic residues. 2 positions are modified to phosphoserine: serine 761 and serine 763. The span at 775-788 (ASESSSEESSSMED) shows a compositional bias: low complexity. Residues 789 to 799 (SSSESESESGS) are compositionally biased toward acidic residues. Residues 811-824 (AKERKPQQERHPPS) show a composition bias toward basic and acidic residues.

This sequence belongs to the adaptor complexes large subunit family. As to quaternary structure, adaptor protein complex 3 (AP-3) is a heterotetramer composed of two large adaptins (delta-type subunit AP3D1 and beta-type subunit AP3B1 or AP3B2), a medium adaptin (mu-type subunit AP3M1 or AP3M2) and a small adaptin (sigma-type subunit APS1 or AP3S2). AP-3 associates with the BLOC-1 complex. Interacts with KIF3A; interaction is direct; interaction is impaired by pyrophosphorylation of AP3B1. In terms of processing, phosphorylated on serine residues. Pyrophosphorylated by 5-diphosphoinositol pentakisphosphate (5-IP7). Pyrophosphorylation impairs interaction with KIF3A. Serine pyrophosphorylation is achieved by Mg(2+)-dependent, but enzyme independent transfer of a beta-phosphate from a inositol pyrophosphate to a pre-phosphorylated serine residue. In terms of tissue distribution, ubiquitously expressed.

The protein localises to the cytoplasmic vesicle. It is found in the clathrin-coated vesicle membrane. It localises to the golgi apparatus. Its function is as follows. Subunit of non-clathrin- and clathrin-associated adaptor protein complex 3 (AP-3) that plays a role in protein sorting in the late-Golgi/trans-Golgi network (TGN) and/or endosomes. The AP complexes mediate both the recruitment of clathrin to membranes and the recognition of sorting signals within the cytosolic tails of transmembrane cargo molecules. AP-3 appears to be involved in the sorting of a subset of transmembrane proteins targeted to lysosomes and lysosome-related organelles. In concert with the BLOC-1 complex, AP-3 is required to target cargos into vesicles assembled at cell bodies for delivery into neurites and nerve terminals. The sequence is that of AP-3 complex subunit beta-1 (Ap3b1) from Mus musculus (Mouse).